Reading from the N-terminus, the 1089-residue chain is Electroneutral sodium bicarbonate exchanger 1 (1089 aa).

Residues 1-476 (MPAGSNEPDG…DYRDALSLQC (476 aa)) are Extracellular-facing. The disordered stretch occupies residues 55–90 (LGRQSHRHHRTHGQKHRRRGGRGKGASQGEEGLEAL). The segment covering 58–76 (QSHRHHRTHGQKHRRRGGR) has biased composition (basic residues). A helical transmembrane segment spans residues 477-497 (LASFLFLYCACMSPVITFGGL). The Cytoplasmic portion of the chain corresponds to 498-505 (LGEATEGR). The helical transmembrane segment at 506 to 526 (ISAIESLFGASMTGIAYSLFA) threads the bilayer. The Extracellular portion of the chain corresponds to 527 to 563 (GQPLTILGSTGPVLVFEKILFKFCKDYALSYLSLRAL). A helical transmembrane segment spans residues 564 to 584 (IGLWTAFLCIVLVATDASSLV). The Cytoplasmic portion of the chain corresponds to 585 to 593 (CYITRFTEE). Residues 594 to 614 (AFASLICIIFIYEAIEKLIHL) traverse the membrane as a helical segment. The Extracellular portion of the chain corresponds to 615-685 (AETYPIHMHS…EFMGSACGHH (71 aa)). Disulfide bonds link C634-C682 and C636-C670. N644 carries an N-linked (GlcNAc) asparagine glycan. Residues 686 to 706 (GPYTPDVLFWSCILFFATFIV) traverse the membrane as a helical segment. Residues 707–729 (SSTLKTFKTSRYFPTRVRSMVSD) are Cytoplasmic-facing. A helical membrane pass occupies residues 730–750 (FAVFLTIFTMVVLDFLIGVPS). Topologically, residues 751–776 (PKLQVPNVFKPTRDDRGWFINPIGPN) are extracellular. A helical transmembrane segment spans residues 777 to 797 (PWWTVIAAIIPALLCTILIFM). Residues 798-822 (DQQITAVIINRKEHKLKKGCGYHLD) are Cytoplasmic-facing. Residues 823–843 (LLMVAVMLGVCSIMGLPWFVA) form a helical membrane-spanning segment. The Extracellular segment spans residues 844–879 (ATVLSITHVNSLKLESECSAPGEQPKFLGIREQRVT). The helical transmembrane segment at 880 to 900 (GLMIFVLMGCSVFMTAVLKFI) threads the bilayer. Over 901 to 902 (PM) the chain is Cytoplasmic. Residues 903–923 (PVLYGVFLYMGVSSLQGIQFF) traverse the membrane as a helical segment. At 924–960 (DRLKLFGMPAKHQPDFIYLRHVPLRKVHLFTLVQLTC) the chain is on the extracellular side. A helical transmembrane segment spans residues 961–981 (LVLLWVIKASPAAIVFPMMVL). Topologically, residues 982-1089 (ALVFVRKVMD…GNTKEKSPFN (108 aa)) are cytoplasmic.

Belongs to the anion exchanger (TC 2.A.31) family. Homodimer. In terms of tissue distribution, expressed in the hippocampal neurons (at protein level). Highly expressed in brain with lower levels in lung, kidney and heart. In the kidney, there is high expression in the inner medulla, localized to the inner medullary collecting duct. In the brain, there seems to be three transcripts each having a different expression pattern. The smaller 3kb transcript has highest expression levels in the thalamus and the largest 9.5kb transcript has highest levels in the substantia nigra. The middle transcript of 4.4kb, which is also the main transcript in kidney, is highly expressed in thalamus. Hence, the highest levels are observed in the thalamus, amygdala and caudate nucleus and very low expression was seen in the corpus callosum.

It is found in the cell membrane. The protein resides in the apical cell membrane. It localises to the basolateral cell membrane. Its subcellular location is the cytoplasmic vesicle. The protein localises to the secretory vesicle. It is found in the synaptic vesicle membrane. It carries out the reaction 2 hydrogencarbonate(out) + chloride(in) + Na(+)(out) = 2 hydrogencarbonate(in) + chloride(out) + Na(+)(in). Mediates electroneutral sodium- and carbonate-dependent chloride-HCO3(-) exchange with a Na(+):HCO3(-) stoichiometry of 2:1. Plays a major role in pH regulation in neurons. Mediates sodium reabsorption in the renal cortical collecting ducts. The chain is Electroneutral sodium bicarbonate exchanger 1 from Mus musculus (Mouse).